We begin with the raw amino-acid sequence, 121 residues long: Apoptin (121 aa).

Disordered stretches follow at residues 1 to 28 (MNAH…LETP) and 57 to 95 (LRSA…PSEY). Residues 58-70 (RSATADNSENTGF) show a composition bias toward polar residues.

Belongs to the gyrovirus apoptin family.

The protein resides in the host nucleus. May act as transcriptional regulator. Induces apoptosis in infected cells. Element of infectious replication cycle. This is Apoptin (VP3) from Gallus gallus (Chicken).